A 253-amino-acid chain; its full sequence is Tetraspanin-11 (253 aa).

4 helical membrane passes run 19–39 (LLFI…AVGV), 63–83 (ILIF…GAVI), 90–110 (LSAY…AGVL), and 220–240 (LLLM…GMIL).

This sequence belongs to the tetraspanin (TM4SF) family.

It is found in the membrane. The protein is Tetraspanin-11 (TSPAN11) of Bos taurus (Bovine).